The sequence spans 312 residues: Olfactory receptor 52A1 (312 aa).

Residues methionine 1–cysteine 27 lie on the Extracellular side of the membrane. N-linked (GlcNAc...) asparagine glycosylation occurs at asparagine 5. A helical membrane pass occupies residues tryptophan 28–leucine 48. Topologically, residues serine 49 to serine 56 are cytoplasmic. Residues leucine 57–serine 77 form a helical membrane-spanning segment. The Extracellular segment spans residues serine 78–leucine 101. The cysteines at positions 99 and 182 are disulfide-linked. The chain crosses the membrane as a helical span at residues glutamine 102–leucine 122. The Cytoplasmic portion of the chain corresponds to aspartate 123 to glutamine 141. Residues leucine 142–leucine 162 traverse the membrane as a helical segment. Over valine 163–lysine 199 the chain is Extracellular. The helical transmembrane segment at isoleucine 200–serine 220 threads the bilayer. The Cytoplasmic portion of the chain corresponds to tyrosine 221–alanine 240. A helical membrane pass occupies residues phenylalanine 241–serine 261. Over phenylalanine 262 to histidine 276 the chain is Extracellular. Residues isoleucine 277–alanine 297 traverse the membrane as a helical segment. Topologically, residues lysine 298–serine 312 are cytoplasmic.

Belongs to the G-protein coupled receptor 1 family.

The protein resides in the cell membrane. In terms of biological role, odorant receptor. The sequence is that of Olfactory receptor 52A1 (OR52A1) from Homo sapiens (Human).